A 192-amino-acid polypeptide reads, in one-letter code: Crossover junction endodeoxyribonuclease RuvC (192 aa).

Residues Asp-8, Glu-67, and Asp-139 contribute to the active site. 3 residues coordinate Mg(2+): Asp-8, Glu-67, and Asp-139.

Belongs to the RuvC family. Homodimer which binds Holliday junction (HJ) DNA. The HJ becomes 2-fold symmetrical on binding to RuvC with unstacked arms; it has a different conformation from HJ DNA in complex with RuvA. In the full resolvosome a probable DNA-RuvA(4)-RuvB(12)-RuvC(2) complex forms which resolves the HJ. It depends on Mg(2+) as a cofactor.

It localises to the cytoplasm. The enzyme catalyses Endonucleolytic cleavage at a junction such as a reciprocal single-stranded crossover between two homologous DNA duplexes (Holliday junction).. Functionally, the RuvA-RuvB-RuvC complex processes Holliday junction (HJ) DNA during genetic recombination and DNA repair. Endonuclease that resolves HJ intermediates. Cleaves cruciform DNA by making single-stranded nicks across the HJ at symmetrical positions within the homologous arms, yielding a 5'-phosphate and a 3'-hydroxyl group; requires a central core of homology in the junction. The consensus cleavage sequence is 5'-(A/T)TT(C/G)-3'. Cleavage occurs on the 3'-side of the TT dinucleotide at the point of strand exchange. HJ branch migration catalyzed by RuvA-RuvB allows RuvC to scan DNA until it finds its consensus sequence, where it cleaves and resolves the cruciform DNA. This chain is Crossover junction endodeoxyribonuclease RuvC, found in Actinobacillus pleuropneumoniae serotype 5b (strain L20).